The sequence spans 138 residues: Secreted RxLR effector protein 91 (138 aa).

An N-terminal signal peptide occupies residues 1–18 (MVIPHIICLPMALHLWTC). The RxLR signature appears at 34-37 (RRLR). Asn93 carries N-linked (GlcNAc...) asparagine glycosylation.

The protein belongs to the RxLR effector family.

The protein resides in the secreted. The protein localises to the host nucleus. Its function is as follows. Secreted effector that completely suppresses the host cell death induced by cell death-inducing proteins. The protein is Secreted RxLR effector protein 91 of Plasmopara viticola (Downy mildew of grapevine).